A 239-amino-acid polypeptide reads, in one-letter code: Geranylgeranylglyceryl phosphate synthase (239 aa).

Mg(2+) contacts are provided by Asp18 and Ser45. Residues Tyr166 to Gly172, Gly197 to Gly198, and Gly219 to Thr220 each bind sn-glycerol 1-phosphate.

Belongs to the GGGP/HepGP synthase family. Group II subfamily. It depends on Mg(2+) as a cofactor.

Its subcellular location is the cytoplasm. The enzyme catalyses sn-glycerol 1-phosphate + (2E,6E,10E)-geranylgeranyl diphosphate = sn-3-O-(geranylgeranyl)glycerol 1-phosphate + diphosphate. It participates in membrane lipid metabolism; glycerophospholipid metabolism. Its function is as follows. Prenyltransferase that catalyzes the transfer of the geranylgeranyl moiety of geranylgeranyl diphosphate (GGPP) to the C3 hydroxyl of sn-glycerol-1-phosphate (G1P). This reaction is the first ether-bond-formation step in the biosynthesis of archaeal membrane lipids. The chain is Geranylgeranylglyceryl phosphate synthase from Pyrobaculum islandicum (strain DSM 4184 / JCM 9189 / GEO3).